The chain runs to 304 residues: Glutaminase (304 aa).

Substrate is bound by residues serine 63, asparagine 113, glutamate 157, asparagine 164, tyrosine 188, tyrosine 240, and valine 258.

This sequence belongs to the glutaminase family. As to quaternary structure, homotetramer.

The enzyme catalyses L-glutamine + H2O = L-glutamate + NH4(+). The protein is Glutaminase of Paraburkholderia phytofirmans (strain DSM 17436 / LMG 22146 / PsJN) (Burkholderia phytofirmans).